The primary structure comprises 433 residues: Glutamate-1-semialdehyde 2,1-aminomutase (433 aa).

N6-(pyridoxal phosphate)lysine is present on Lys271.

The protein belongs to the class-III pyridoxal-phosphate-dependent aminotransferase family. HemL subfamily. Homodimer. Requires pyridoxal 5'-phosphate as cofactor.

Its subcellular location is the cytoplasm. It catalyses the reaction (S)-4-amino-5-oxopentanoate = 5-aminolevulinate. The protein operates within porphyrin-containing compound metabolism; protoporphyrin-IX biosynthesis; 5-aminolevulinate from L-glutamyl-tRNA(Glu): step 2/2. Its pathway is porphyrin-containing compound metabolism; chlorophyll biosynthesis. This chain is Glutamate-1-semialdehyde 2,1-aminomutase, found in Prochlorococcus marinus (strain MIT 9215).